Here is a 38-residue protein sequence, read N- to C-terminus: Small ribosomal subunit protein uS12c (38 aa).

Positions 1 to 26 (MPTIQQLIRNARQPIENRKKSPALRG) are disordered.

The protein belongs to the universal ribosomal protein uS12 family. Part of the 30S ribosomal subunit.

Its subcellular location is the plastid. It localises to the chloroplast. Functionally, with S4 and S5 plays an important role in translational accuracy. Located at the interface of the 30S and 50S subunits. This is Small ribosomal subunit protein uS12c (rps12) from Pinus contorta (Shore pine).